Here is a 253-residue protein sequence, read N- to C-terminus: UPF0280 protein MA_1715 (253 aa).

Belongs to the UPF0280 family.

The protein is UPF0280 protein MA_1715 of Methanosarcina acetivorans (strain ATCC 35395 / DSM 2834 / JCM 12185 / C2A).